The chain runs to 187 residues: ATP synthase subunit b, chloroplastic (187 aa).

A helical transmembrane segment spans residues Ile-34–Leu-56.

The protein belongs to the ATPase B chain family. In terms of assembly, F-type ATPases have 2 components, F(1) - the catalytic core - and F(0) - the membrane proton channel. F(1) has five subunits: alpha(3), beta(3), gamma(1), delta(1), epsilon(1). F(0) has four main subunits: a(1), b(1), b'(1) and c(10-14). The alpha and beta chains form an alternating ring which encloses part of the gamma chain. F(1) is attached to F(0) by a central stalk formed by the gamma and epsilon chains, while a peripheral stalk is formed by the delta, b and b' chains.

Its subcellular location is the plastid. It localises to the chloroplast thylakoid membrane. F(1)F(0) ATP synthase produces ATP from ADP in the presence of a proton or sodium gradient. F-type ATPases consist of two structural domains, F(1) containing the extramembraneous catalytic core and F(0) containing the membrane proton channel, linked together by a central stalk and a peripheral stalk. During catalysis, ATP synthesis in the catalytic domain of F(1) is coupled via a rotary mechanism of the central stalk subunits to proton translocation. Its function is as follows. Component of the F(0) channel, it forms part of the peripheral stalk, linking F(1) to F(0). The polypeptide is ATP synthase subunit b, chloroplastic (Pleurastrum terricola (Filamentous green alga)).